Consider the following 1153-residue polypeptide: MACPWKFLFKTKFHQYAMNGEKDINNNVEKAPCATSSPVTQDDLQYHNLSKQQNESPQPLVETGKKSPESLVKLDATPLSSPRHVRIKNWGSGMTFQDTLHHKAKGILTCRSKSCLGSIMTPKSLTRGPRDKPTPPDELLPQAIEFVNQYYGSFKEAKIEEHLARVEAVTKEIETTGTYQLTGDELIFATKQAWRNAPRCIGRIQWSNLQVFDARSCSTAREMFEHICRHVRYSTNNGNIRSAITVFPQRSDGKHDFRVWNAQLIRYAGYQMPDGSIRGDPANVEFTQLCIDLGWKPKYGRFDVVPLVLQANGRDPELFEIPPDLVLEVAMEHPKYEWFRELELKWYALPAVANMLLEVGGLEFPGCPFNGWYMGTEIGVRDFCDVQRYNILEEVGRRMGLETHKLASLWKDQAVVEINIAVLHSFQKQNVTIMDHHSAAESFMKYMQNEYRSRGGCPADWIWLVPPMSGSITPVFHQEMLNYVLSPFYYYQVEAWKTHVWQDEKRRPKRREIPLKVLVKAVLFACMLMRKTMASRVRVTILFATETGKSEALAWDLGALFSCAFNPKVVCMDKYRLSCLEEERLLLVVTSTFGNGDCPGNGEKLKKSLFMLKELNNKFRYAVFGLGSSMYPRFCAFAHDIDQKLSHLGASQLTPMGEGDELSGQEDAFRSWAVQTFKAACETFDVRGKQHIQIPKLYTSNVTWDPHHYRLVQDSQPLDLSKALSSMHAKNVFTMRLKSRQNLQSPTSSRATILVELSCEDGQGLNYLPGEHLGVCPGNQPALVQGILERVVDGPTPHQTVRLEALDESGSYWVSDKRLPPCSLSQALTYFLDITTPPTQLLLQKLAQVATEEPERQRLEALCQPSEYSKWKFTNSPTFLEVLEEFPSLRVSAGFLLSQLPILKPRFYSISSSRDHTPTEIHLTVAVVTYHTRDGQGPLHHGVCSTWLNSLKPQDPVPCFVRNASGFHLPEDPSHPCILIGPGTGIAPFRSFWQQRLHDSQHKGVRGGRMTLVFGCRRPDEDHIYQEEMLEMAQKGVLHAVHTAYSRLPGKPKVYVQDILRQQLASEVLRVLHKEPGHLYVCGDVRMARDVAHTLKQLVAAKLKLNEEQVEDYFFQLKSQKRYHEDIFGAVFPYEAKKDRVAVQPSSLEMSAL.

Positions 23–27 (DINNN) match the DINNN-motif; mediates interaction with SPSB1, SPSB2 and SPSB4 motif. Residues Cys110 and Cys115 each contribute to the Zn(2+) site. Ser118 contacts (6R)-L-erythro-5,6,7,8-tetrahydrobiopterin. Residue Cys200 participates in heme b binding. Phosphoserine; by PKA is present on Ser234. L-arginine-binding residues include Gln263, Trp372, Tyr373, and Glu377. Arg381, Ile462, Trp463, and Phe476 together coordinate (6R)-L-erythro-5,6,7,8-tetrahydrobiopterin. Tyr491 serves as a coordination point for heme b. Positions 515–535 (LKVLVKAVLFACMLMRKTMAS) are calmodulin-binding. Residues 539–677 (VTILFATETG…AFRSWAVQTF (139 aa)) enclose the Flavodoxin-like domain. Thr545, Glu546, Thr547, Lys549, and Ser550 together coordinate FMN. Tyr575 is modified (phosphotyrosine). Phosphoserine; by PKA is present on Ser578. FMN is bound by residues Ser591, Thr592, Ser628, Arg633, Cys635, Glu661, and Gln665. In terms of domain architecture, FAD-binding FR-type spans 730–970 (KNVFTMRLKS…VRNASGFHLP (241 aa)). Arg750 is an NADP(+) binding site. His772 lines the FAD pocket. Ser892 is subject to Phosphoserine; by PKA. FAD contacts are provided by Arg906, Tyr908, Ser909, Thr924, and Ala926. Thr929 provides a ligand contact to NADP(+). Positions 930, 943, 944, and 945 each coordinate FAD. The NADP(+) site is built by Thr984, Arg1017, Ser1046, Arg1047, Lys1053, Tyr1055, Gln1057, and Asp1090.

This sequence belongs to the NOS family. Homodimer. Interacts with NHERF1. Interacts with GAPDH; induced by oxidatively-modified low-densitity lipoprotein (LDL(ox)). Interacts with S100A8 and S100A9 to form the iNOS-S100A8/9 transnitrosylase complex. Interacts with SPSB1, SPSB2 and SPSB4. Interacts with ELOC and CUL5 in the presence of SPSB1 or SPSB2 or SPSB4. Forms a complex with ASL, ASS1 and HSP90AA1; the complex regulates cell-autonomous L-arginine synthesis and citrulline recycling while channeling extracellular L-arginine to nitric oxide synthesis pathway. The cofactor is heme b. It depends on FAD as a cofactor. FMN is required as a cofactor. Requires (6R)-L-erythro-5,6,7,8-tetrahydrobiopterin as cofactor. Post-translationally, polyubiquitinated; mediated by SPSB1, SPSB2 and SPSB4, leading to proteasomal degradation. Expressed in the liver, retina, bone cells and airway epithelial cells of the lung. Not expressed in the platelets. Expressed in chondrocytes.

The protein localises to the cytoplasm. It localises to the cytosol. The enzyme catalyses 2 L-arginine + 3 NADPH + 4 O2 + H(+) = 2 L-citrulline + 2 nitric oxide + 3 NADP(+) + 4 H2O. With respect to regulation, regulated by calcium/calmodulin. Aspirin inhibits expression and function of this enzyme and effects may be exerted at the level of translational/post-translational modification and directly on the catalytic activity. Produces nitric oxide (NO) which is a messenger molecule with diverse functions throughout the body. In macrophages, NO mediates tumoricidal and bactericidal actions. Also has nitrosylase activity and mediates cysteine S-nitrosylation of cytoplasmic target proteins such PTGS2/COX2. As component of the iNOS-S100A8/9 transnitrosylase complex involved in the selective inflammatory stimulus-dependent S-nitrosylation of GAPDH on 'Cys-247' implicated in regulation of the GAIT complex activity and probably multiple targets including ANXA5, EZR, MSN and VIM. Involved in inflammation, enhances the synthesis of pro-inflammatory mediators such as IL6 and IL8. The protein is Nitric oxide synthase, inducible of Homo sapiens (Human).